We begin with the raw amino-acid sequence, 700 residues long: Elongation factor G (700 aa).

A tr-type G domain is found at 10–286 (TKVRNIGIMA…AVIDYLPNPL (277 aa)). Residues 19–26 (AHIDAGKT), 83–87 (DTPGH), and 137–140 (NKMD) contribute to the GTP site.

This sequence belongs to the TRAFAC class translation factor GTPase superfamily. Classic translation factor GTPase family. EF-G/EF-2 subfamily.

The protein resides in the cytoplasm. In terms of biological role, catalyzes the GTP-dependent ribosomal translocation step during translation elongation. During this step, the ribosome changes from the pre-translocational (PRE) to the post-translocational (POST) state as the newly formed A-site-bound peptidyl-tRNA and P-site-bound deacylated tRNA move to the P and E sites, respectively. Catalyzes the coordinated movement of the two tRNA molecules, the mRNA and conformational changes in the ribosome. The chain is Elongation factor G from Mycolicibacterium vanbaalenii (strain DSM 7251 / JCM 13017 / BCRC 16820 / KCTC 9966 / NRRL B-24157 / PYR-1) (Mycobacterium vanbaalenii).